The sequence spans 349 residues: MSKETLILLYGGRSAEREVSVLSAESVMRAVNYSRFIVKTYFITKGGEFIKTQEFTDRPAEEEKLLTNDLAESYPKISPAAIYEKDAVVFPVLHGPMGEDGSIQGFLEILRLAYVGPNILSASSTMDKLLAKHVFEAVGVPQVPYVAAFADENQVEIAQEVVEKLDFPVFVKPANMGSSVGISKVDDLADLQPALSEAYKYDNRVVIEQGVDAREIECAVLGNNSDVSATLPGEVVKDVGFYDYNSKYIDNKIQMDIPAKVSADLAQKIQEYAKKAYKAVNGAGLSRCDFFVTKDGNVYLNEVNAIPGFTQWSMYPLLWENMGLSYSDLIEKLVDLAKETFETRENHLL.

Positions 132–335 (KHVFEAVGVP…YSDLIEKLVD (204 aa)) constitute an ATP-grasp domain. 162–217 (VEKLDFPVFVKPANMGSSVGISKVDDLADLQPALSEAYKYDNRVVIEQGVDAREIE) serves as a coordination point for ATP. Residues Asp289, Glu302, and Asn304 each coordinate Mg(2+).

It belongs to the D-alanine--D-alanine ligase family. The cofactor is Mg(2+). It depends on Mn(2+) as a cofactor.

It is found in the cytoplasm. The enzyme catalyses 2 D-alanine + ATP = D-alanyl-D-alanine + ADP + phosphate + H(+). It functions in the pathway cell wall biogenesis; peptidoglycan biosynthesis. Cell wall formation. The polypeptide is D-alanine--D-alanine ligase (Lactococcus lactis subsp. cremoris (strain MG1363)).